Here is a 455-residue protein sequence, read N- to C-terminus: Membrane protein Pbs54 (455 aa).

A helical transmembrane segment spans residues 12–32 (IISIIILILRISLFSCAEHLF). Residues asparagine 41, asparagine 102, and asparagine 125 are each glycosylated (N-linked (GlcNAc...) asparagine). 6 helical membrane passes run 181–201 (IFLIFLISYMYWFCIKILFNG), 220–240 (FIFFVILKISLIFLPAILSCI), 244–264 (ILTFYFYSISMSPCKDIFYLF), 285–305 (ILIGNVIYNFLCPPKIIIIFI), 312–332 (FLVKIICLTIILFISFLIFFL), and 346–366 (FVFSFTSSYLIVSCFAYFWNI). Asparagine 373 is a glycosylation site (N-linked (GlcNAc...) asparagine). A helical membrane pass occupies residues 398 to 418 (NMFALFMIFAMSILSIIFPRI).

It localises to the cell projection. The protein localises to the cilium. The protein resides in the flagellum. Its subcellular location is the cell membrane. In terms of biological role, plays a role in gamete fertilization. Required for the successful transmission of parasites to mosquito. The protein is Membrane protein Pbs54 of Plasmodium berghei (strain Anka).